A 445-amino-acid polypeptide reads, in one-letter code: Potassium/proton antiporter CemA (445 aa).

4 helical membrane passes run 44 to 64, 330 to 350, 368 to 388, and 405 to 425; these read MQVS…VNIC, ALTC…ILIL, LIII…GWKL, and FILC…KYWI.

It belongs to the CemA family.

It localises to the plastid. Its subcellular location is the chloroplast inner membrane. The enzyme catalyses K(+)(in) + H(+)(out) = K(+)(out) + H(+)(in). Its function is as follows. Contributes to K(+)/H(+) antiport activity by supporting proton efflux to control proton extrusion and homeostasis in chloroplasts in a light-dependent manner to modulate photosynthesis. Prevents excessive induction of non-photochemical quenching (NPQ) under continuous-light conditions. Indirectly promotes efficient inorganic carbon uptake into chloroplasts. The protein is Potassium/proton antiporter CemA of Pleurastrum terricola (Filamentous green alga).